The sequence spans 101 residues: Chaperone modulatory protein CbpM (101 aa).

It belongs to the CbpM family.

In terms of biological role, interacts with CbpA and inhibits both the DnaJ-like co-chaperone activity and the DNA binding activity of CbpA. Together with CbpA, modulates the activity of the DnaK chaperone system. Does not inhibit the co-chaperone activity of DnaJ. The protein is Chaperone modulatory protein CbpM of Pseudomonas entomophila (strain L48).